A 546-amino-acid chain; its full sequence is 2-succinyl-5-enolpyruvyl-6-hydroxy-3-cyclohexene-1-carboxylate synthase (546 aa).

The protein belongs to the TPP enzyme family. MenD subfamily. In terms of assembly, homodimer. Mg(2+) serves as cofactor. Requires Mn(2+) as cofactor. The cofactor is thiamine diphosphate.

The catalysed reaction is isochorismate + 2-oxoglutarate + H(+) = 5-enolpyruvoyl-6-hydroxy-2-succinyl-cyclohex-3-ene-1-carboxylate + CO2. It functions in the pathway quinol/quinone metabolism; 1,4-dihydroxy-2-naphthoate biosynthesis; 1,4-dihydroxy-2-naphthoate from chorismate: step 2/7. It participates in quinol/quinone metabolism; menaquinone biosynthesis. Its function is as follows. Catalyzes the thiamine diphosphate-dependent decarboxylation of 2-oxoglutarate and the subsequent addition of the resulting succinic semialdehyde-thiamine pyrophosphate anion to isochorismate to yield 2-succinyl-5-enolpyruvyl-6-hydroxy-3-cyclohexene-1-carboxylate (SEPHCHC). The protein is 2-succinyl-5-enolpyruvyl-6-hydroxy-3-cyclohexene-1-carboxylate synthase of Mycolicibacterium smegmatis (strain ATCC 700084 / mc(2)155) (Mycobacterium smegmatis).